The sequence spans 827 residues: Multiphosphoryl transfer protein (827 aa).

Positions 2 to 142 constitute a PTS EIIA type-2 domain; it reads IPLTSELVAI…AVIVARLTGA (141 aa). His62 (tele-phosphohistidine intermediate; for EIIA activity) is an active-site residue. Residue His62 is modified to Phosphohistidine; by HPr. The HPr domain occupies 157-245; the sequence is AQGIDVVVTG…AFEAGLEDEE (89 aa). The Pros-phosphohistidine intermediate; for HPr activity role is filled by His171. His171 carries the post-translational modification Phosphohistidine; by EI. The interval 270 to 827 is PTS EI; the sequence is EGRTLVGISS…TTAAEVRGLK (558 aa). The active-site Tele-phosphohistidine intermediate; for PTS EI activity is the His457. A Phosphohistidine; by autocatalysis modification is found at His457. Positions 564 and 600 each coordinate phosphoenolpyruvate. Residues Glu693 and Asp717 each contribute to the Mg(2+) site. Residues 716-717 and Arg727 contribute to the phosphoenolpyruvate site; that span reads ND. The active-site Proton donor is the Cys764.

This sequence belongs to the PEP-utilizing enzyme family. Mg(2+) serves as cofactor.

It localises to the cytoplasm. It catalyses the reaction L-histidyl-[protein] + phosphoenolpyruvate = N(pros)-phospho-L-histidyl-[protein] + pyruvate. In terms of biological role, the phosphoenolpyruvate-dependent sugar phosphotransferase system (sugar PTS), a major carbohydrate active transport system, catalyzes the phosphorylation of incoming sugar substrates concomitantly with their translocation across the cell membrane. The enzyme II FruAB PTS system is involved in fructose transport. The polypeptide is Multiphosphoryl transfer protein (Rhodobacter capsulatus (Rhodopseudomonas capsulata)).